Here is a 742-residue protein sequence, read N- to C-terminus: Serine/threonine-protein kinase SKY1 (742 aa).

The tract at residues 13 to 146 is disordered; the sequence is KSAHLADTST…KDYRPGGYHP (134 aa). Residues 19–35 are compositionally biased toward polar residues; that stretch reads DTSTDASISCEEATSSQ. Positions 56–73 are enriched in low complexity; the sequence is TKSKLSLALQTSKSSSSA. Residues 81 to 101 show a composition bias toward basic and acidic residues; sequence TSSKTEDFSTKSIKKKPDSGV. Residues 106–127 are compositionally biased toward low complexity; the sequence is SIQSDSGPQSDSDLDSDSSISS. The segment covering 128–140 has biased composition (basic and acidic residues); the sequence is CDERNEESLKDYR. Positions 158-706 constitute a Protein kinase domain; it reads YILVRKLGWG…AGGLVNHPWL (549 aa). Residues 164–172 and Lys187 each bind ATP; that span reads LGWGHFSTV. Residue Asp294 is the Proton acceptor of the active site. A phosphothreonine mark is found at Thr383 and Thr386. A phosphoserine mark is found at Ser388, Ser393, Ser410, Ser427, Ser432, Ser445, Ser449, and Ser453. Residues 459–491 form a disordered region; sequence INEDSNDNNNNDNSKNKNNNNNNSNNNNNEDIM. Residues 465–489 are compositionally biased toward low complexity; the sequence is DNNNNDNSKNKNNNNNNSNNNNNED.

This sequence belongs to the protein kinase superfamily. Ser/Thr protein kinase family.

The catalysed reaction is L-seryl-[protein] + ATP = O-phospho-L-seryl-[protein] + ADP + H(+). It carries out the reaction L-threonyl-[protein] + ATP = O-phospho-L-threonyl-[protein] + ADP + H(+). Functionally, constitutively active kinase, specifically and sequentially phosphorylates serine/arginine (SR)-type shuttling mRNA binding proteins in their RS dipeptide repeats. The polypeptide is Serine/threonine-protein kinase SKY1 (SKY1) (Saccharomyces cerevisiae (strain ATCC 204508 / S288c) (Baker's yeast)).